We begin with the raw amino-acid sequence, 312 residues long: Methionyl-tRNA formyltransferase (312 aa).

111 to 114 (SLLP) is a (6S)-5,6,7,8-tetrahydrofolate binding site.

The protein belongs to the Fmt family.

The enzyme catalyses L-methionyl-tRNA(fMet) + (6R)-10-formyltetrahydrofolate = N-formyl-L-methionyl-tRNA(fMet) + (6S)-5,6,7,8-tetrahydrofolate + H(+). Functionally, attaches a formyl group to the free amino group of methionyl-tRNA(fMet). The formyl group appears to play a dual role in the initiator identity of N-formylmethionyl-tRNA by promoting its recognition by IF2 and preventing the misappropriation of this tRNA by the elongation apparatus. The sequence is that of Methionyl-tRNA formyltransferase from Myxococcus xanthus (strain DK1622).